The sequence spans 708 residues: RUN and FYVE domain-containing protein 1 (708 aa).

Over residues 1–17 (MADREGGCAAGRGRELE) the composition is skewed to basic and acidic residues. A disordered region spans residues 1–57 (MADREGGCAAGRGRELEPELEPGPGPGSALEPGEEFEIVDRSQLPGPGDLRSATRPR). Residues 139–271 (DADHAPLQQF…LDANLCLKGE (133 aa)) enclose the RUN domain. Positions 321-374 (TVGDLQTKIDGLEKTNSKLQEELSAATDRICSLQEEQQQLREQNELIRERSEKS) form a coiled coil. Tyr389 and Tyr400 each carry phosphotyrosine. The stretch at 405 to 617 (KQLKEEKKVR…QALQEMGLHL (213 aa)) forms a coiled coil. The segment at 493-522 (QVMSSMKQMEERLQHSERARQGAEERSHKL) is disordered. The span at 500 to 522 (QMEERLQHSERARQGAEERSHKL) shows a compositional bias: basic and acidic residues. An interaction with RAB4 region spans residues 615 to 625 (LHLSQSKLKME). A Phosphoserine modification is found at Ser620. Residues 642-700 (DDEATHCRQCEKEFSISRRKHHCRNCGHIFCNTCSSNELALPSYPKPVRVCDSCHTLLL) form an FYVE-type zinc finger. Residues Cys648, Cys651, Cys664, Cys667, Cys672, Cys675, Cys692, and Cys695 each coordinate Zn(2+).

As to quaternary structure, self-assembles through coiled coil domains to drive ELVA (endo-lysosomal vesicular assembly) formation. Interacts with BMX. May interact with SSB. Interacts with RAB4 and RAB5 that have been activated by GTP-binding. Interacts WITH RAB14 and RAB4B (GTP-bound form); the interactions allow endosomal tethering and fusion. Interacts with ARL8B (GTP-bound form); the interaction is required for RUFY1 endosomal location and promotes interaction with RAB14. In terms of processing, phosphorylation on Tyr-389 and/or Tyr-400 is required for interaction with BMX and endosomal targeting. In terms of tissue distribution, broadly expressed, with highest levels in lung, testis, kidney and brain.

The protein localises to the early endosome membrane. Functionally, activating adapter involved in cargo sorting from early/recycling endosomes. Regulates retrieval of proteins from endosomes to the trans-Golgi network through interaction with the dynein-dynactin complex. Dual effector of RAB4B and RAB14, mediates a cooperative interaction allowing endosomal tethering and fusion. Binds phospholipid vesicles containing phosphatidylinositol 3-phosphate and participates in early endosomal trafficking. In oocytes, self-assembles to form a protein matrix which hold together endolysosomes, autophagosomes and proteasomes and generate non-membrane-bound compartments called endo-lysosomal vesicular assemblies (ELVAs). In immature oocytes, ELVAs sequester ubiquitinated protein aggregates and degrade them upon oocyte maturation. In Homo sapiens (Human), this protein is RUN and FYVE domain-containing protein 1.